A 416-amino-acid chain; its full sequence is Probable protein phosphatase 2C 75 (416 aa).

Disordered stretches follow at residues 1–20 (MTEI…SPTK) and 32–51 (RRQA…DRTD). The PPM-type phosphatase domain maps to 108–411 (LYGIVSVMGR…DNISVVVIDL (304 aa)). Asp149, Gly150, Asp337, and Asp402 together coordinate Mn(2+).

Belongs to the PP2C family. Mg(2+) is required as a cofactor. Mn(2+) serves as cofactor.

The catalysed reaction is O-phospho-L-seryl-[protein] + H2O = L-seryl-[protein] + phosphate. It catalyses the reaction O-phospho-L-threonyl-[protein] + H2O = L-threonyl-[protein] + phosphate. Negative regulator of abscisic acid (ABA) responses during seed germination. The chain is Probable protein phosphatase 2C 75 (AHG1) from Arabidopsis thaliana (Mouse-ear cress).